Consider the following 155-residue polypeptide: Small ribosomal subunit protein uS7cz/uS7cy (155 aa).

It belongs to the universal ribosomal protein uS7 family. Part of the 30S ribosomal subunit.

Its subcellular location is the plastid. The protein localises to the chloroplast. One of the primary rRNA binding proteins, it binds directly to 16S rRNA where it nucleates assembly of the head domain of the 30S subunit. In Piper cenocladum (Ant piper), this protein is Small ribosomal subunit protein uS7cz/uS7cy (rps7-A).